The sequence spans 332 residues: Large ribosomal subunit protein mL44 (332 aa).

The N-terminal 30 residues, 1–30 (MASGLVRLLQQGHRCLLAPVAPKLVPPVRG), are a transit peptide targeting the mitochondrion. An RNase III domain is found at 86 to 228 (DLLKTAFVNS…LITQMTGKEL (143 aa)). The 71-residue stretch at 236–306 (NPMGLLVEEL…ARVALRKLYG (71 aa)) folds into the DRBM domain.

It belongs to the ribonuclease III family. Mitochondrion-specific ribosomal protein mL44 subfamily. In terms of assembly, component of the mitochondrial large ribosomal subunit (mt-LSU). Mature mammalian 55S mitochondrial ribosomes consist of a small (28S) and a large (39S) subunit. The 28S small subunit contains a 12S ribosomal RNA (12S mt-rRNA) and 30 different proteins. The 39S large subunit contains a 16S rRNA (16S mt-rRNA), a copy of mitochondrial valine transfer RNA (mt-tRNA(Val)), which plays an integral structural role, and 52 different proteins.

It localises to the mitochondrion. Functionally, component of the 39S subunit of mitochondrial ribosome. May have a function in the assembly/stability of nascent mitochondrial polypeptides exiting the ribosome. The polypeptide is Large ribosomal subunit protein mL44 (MRPL44) (Homo sapiens (Human)).